A 220-amino-acid polypeptide reads, in one-letter code: Elongation factor Ts, chloroplastic (220 aa).

It belongs to the EF-Ts family.

It is found in the plastid. The protein resides in the chloroplast. Its function is as follows. Associates with the EF-Tu.GDP complex and induces the exchange of GDP to GTP. It remains bound to the aminoacyl-tRNA.EF-Tu.GTP complex up to the GTP hydrolysis stage on the ribosome. The chain is Elongation factor Ts, chloroplastic (tsf) from Porphyra purpurea (Red seaweed).